A 229-amino-acid polypeptide reads, in one-letter code: Urease accessory protein UreF (229 aa).

Belongs to the UreF family. As to quaternary structure, ureD, UreF and UreG form a complex that acts as a GTP-hydrolysis-dependent molecular chaperone, activating the urease apoprotein by helping to assemble the nickel containing metallocenter of UreC. The UreE protein probably delivers the nickel.

The protein resides in the cytoplasm. Functionally, required for maturation of urease via the functional incorporation of the urease nickel metallocenter. The chain is Urease accessory protein UreF from Alcanivorax borkumensis (strain ATCC 700651 / DSM 11573 / NCIMB 13689 / SK2).